The following is a 220-amino-acid chain: Deoxyribose-phosphate aldolase 2 (220 aa).

Aspartate 89 acts as the Proton donor/acceptor in catalysis. Lysine 151 (schiff-base intermediate with acetaldehyde) is an active-site residue. The Proton donor/acceptor role is filled by lysine 180.

This sequence belongs to the DeoC/FbaB aldolase family. DeoC type 1 subfamily.

It is found in the cytoplasm. The enzyme catalyses 2-deoxy-D-ribose 5-phosphate = D-glyceraldehyde 3-phosphate + acetaldehyde. It functions in the pathway carbohydrate degradation; 2-deoxy-D-ribose 1-phosphate degradation; D-glyceraldehyde 3-phosphate and acetaldehyde from 2-deoxy-alpha-D-ribose 1-phosphate: step 2/2. Functionally, catalyzes a reversible aldol reaction between acetaldehyde and D-glyceraldehyde 3-phosphate to generate 2-deoxy-D-ribose 5-phosphate. The sequence is that of Deoxyribose-phosphate aldolase 2 from Staphylococcus aureus (strain N315).